Here is a 159-residue protein sequence, read N- to C-terminus: Probable inactive acireductone dioxygenase 2 (159 aa).

Belongs to the acireductone dioxygenase (ARD) family.

It is found in the cytoplasm. Its subcellular location is the nucleus. Functionally, probable inactive acireductone dioxygenase. This chain is Probable inactive acireductone dioxygenase 2, found in Caenorhabditis briggsae.